The sequence spans 202 residues: Urease accessory protein UreF (202 aa).

The protein belongs to the UreF family. UreD, UreF and UreG form a complex that acts as a GTP-hydrolysis-dependent molecular chaperone, activating the urease apoprotein by helping to assemble the nickel containing metallocenter of UreC. The UreE protein probably delivers the nickel.

Its subcellular location is the cytoplasm. Required for maturation of urease via the functional incorporation of the urease nickel metallocenter. The sequence is that of Urease accessory protein UreF from Sporosarcina pasteurii (Bacillus pasteurii).